The following is a 395-amino-acid chain: Inactive serine protease 54 (395 aa).

The signal sequence occupies residues 1 to 30; it reads MVSAAGLSGDGKMRGVLLVLLGLLYSSTSC. The 233-residue stretch at 37-269 folds into the Peptidase S1 domain; the sequence is VFYGPDPKEG…YSKWITSKAE (233 aa). Asn123 carries an N-linked (GlcNAc...) asparagine glycan. Intrachain disulfides connect Cys164–Cys227, Cys195–Cys205, and Cys217–Cys248. The tract at residues 324 to 348 is disordered; it reads RLGNSSRDSLDVREKDVKESGRSPE. Asn327 carries N-linked (GlcNAc...) asparagine glycosylation. Residues 331 to 345 are compositionally biased toward basic and acidic residues; that stretch reads DSLDVREKDVKESGR.

Belongs to the peptidase S1 family. Plasma kallikrein subfamily.

The protein localises to the secreted. This is Inactive serine protease 54 (PRSS54) from Homo sapiens (Human).